The primary structure comprises 176 residues: 3-hydroxydecanoyl-[acyl-carrier-protein] dehydratase (176 aa).

H75 is a catalytic residue.

Belongs to the thioester dehydratase family. FabA subfamily. As to quaternary structure, homodimer.

The protein localises to the cytoplasm. The enzyme catalyses a (3R)-hydroxyacyl-[ACP] = a (2E)-enoyl-[ACP] + H2O. It carries out the reaction (3R)-hydroxydecanoyl-[ACP] = (2E)-decenoyl-[ACP] + H2O. The catalysed reaction is (2E)-decenoyl-[ACP] = (3Z)-decenoyl-[ACP]. Its pathway is lipid metabolism; fatty acid biosynthesis. Functionally, necessary for the introduction of cis unsaturation into fatty acids. Catalyzes the dehydration of (3R)-3-hydroxydecanoyl-ACP to E-(2)-decenoyl-ACP and then its isomerization to Z-(3)-decenoyl-ACP. Can catalyze the dehydratase reaction for beta-hydroxyacyl-ACPs with saturated chain lengths up to 16:0, being most active on intermediate chain length. The polypeptide is 3-hydroxydecanoyl-[acyl-carrier-protein] dehydratase (Glaesserella parasuis serovar 5 (strain SH0165) (Haemophilus parasuis)).